A 453-amino-acid chain; its full sequence is UDP-N-acetylmuramoylalanine--D-glutamate ligase (453 aa).

119–125 (GSNGKTT) contacts ATP.

This sequence belongs to the MurCDEF family.

The protein resides in the cytoplasm. The enzyme catalyses UDP-N-acetyl-alpha-D-muramoyl-L-alanine + D-glutamate + ATP = UDP-N-acetyl-alpha-D-muramoyl-L-alanyl-D-glutamate + ADP + phosphate + H(+). Its pathway is cell wall biogenesis; peptidoglycan biosynthesis. Its function is as follows. Cell wall formation. Catalyzes the addition of glutamate to the nucleotide precursor UDP-N-acetylmuramoyl-L-alanine (UMA). The chain is UDP-N-acetylmuramoylalanine--D-glutamate ligase from Streptococcus uberis (strain ATCC BAA-854 / 0140J).